The primary structure comprises 572 residues: Arginine--tRNA ligase (572 aa).

A 'HIGH' region motif is present at residues 121–131 (PNLAKEMHVGH).

It belongs to the class-I aminoacyl-tRNA synthetase family. Monomer.

It is found in the cytoplasm. The enzyme catalyses tRNA(Arg) + L-arginine + ATP = L-arginyl-tRNA(Arg) + AMP + diphosphate. This Chromobacterium violaceum (strain ATCC 12472 / DSM 30191 / JCM 1249 / CCUG 213 / NBRC 12614 / NCIMB 9131 / NCTC 9757 / MK) protein is Arginine--tRNA ligase.